The sequence spans 399 residues: S-adenosylmethionine synthase (399 aa).

Gly136–Asp141 is an ATP binding site.

The protein belongs to the AdoMet synthase 2 family. Mg(2+) is required as a cofactor.

It catalyses the reaction L-methionine + ATP + H2O = S-adenosyl-L-methionine + phosphate + diphosphate. The protein operates within amino-acid biosynthesis; S-adenosyl-L-methionine biosynthesis; S-adenosyl-L-methionine from L-methionine: step 1/1. Its function is as follows. Catalyzes the formation of S-adenosylmethionine from methionine and ATP. This is S-adenosylmethionine synthase from Methanothrix thermoacetophila (strain DSM 6194 / JCM 14653 / NBRC 101360 / PT) (Methanosaeta thermophila).